The chain runs to 185 residues: ATP synthase subunit delta (185 aa).

Belongs to the ATPase delta chain family. As to quaternary structure, F-type ATPases have 2 components, F(1) - the catalytic core - and F(0) - the membrane proton channel. F(1) has five subunits: alpha(3), beta(3), gamma(1), delta(1), epsilon(1). F(0) has three main subunits: a(1), b(2) and c(10-14). The alpha and beta chains form an alternating ring which encloses part of the gamma chain. F(1) is attached to F(0) by a central stalk formed by the gamma and epsilon chains, while a peripheral stalk is formed by the delta and b chains.

The protein resides in the cell inner membrane. Functionally, f(1)F(0) ATP synthase produces ATP from ADP in the presence of a proton or sodium gradient. F-type ATPases consist of two structural domains, F(1) containing the extramembraneous catalytic core and F(0) containing the membrane proton channel, linked together by a central stalk and a peripheral stalk. During catalysis, ATP synthesis in the catalytic domain of F(1) is coupled via a rotary mechanism of the central stalk subunits to proton translocation. This protein is part of the stalk that links CF(0) to CF(1). It either transmits conformational changes from CF(0) to CF(1) or is implicated in proton conduction. The chain is ATP synthase subunit delta from Ehrlichia chaffeensis (strain ATCC CRL-10679 / Arkansas).